The primary structure comprises 218 residues: Ras-related protein Rab-4A (218 aa).

9 residues coordinate GTP: G23, T24, G25, K26, S27, C28, S42, H44, and T45. Position 27 (S27) interacts with Mg(2+). Residues 44–49 carry the Switch 1 motif; sequence HTIGVE. 2 residues coordinate Mg(2+): T45 and D68. The Switch 2 signature appears at 70-79; sequence AGQERFRSVT. GTP is bound at residue G71. At Q72 the chain carries 5-glutamyl serotonin. Residues N126, K127, D129, A157, and L158 each coordinate GTP. At S190 the chain carries Phosphoserine. A Phosphoserine; by CDK1 modification is found at S204. Residues C216 and C218 are each lipidated (S-geranylgeranyl cysteine). Cysteine methyl ester is present on C218.

It belongs to the small GTPase superfamily. Rab family. Interacts with SGSM1, SGSM2 and SGSM3. Interacts with RAB11FIP1, RABEP1, ZFYVE20 and RUFY1. Interacts (membrane-bound form) with NDRG1; the interaction involves NDRG1 in vesicular recycling of E-cadherin. Interacts (in GTP-bound form) with GRIPAP1 (via N-terminus). Interacts with RABEP1 and RBSN. Does not interact with HPS4. Does not interact with HPS4. Interacts with RABEP2; this interaction may mediate VEGFR2 cell surface expression. The cofactor is Mg(2+). Post-translationally, serotonylation of Gln-72 by TGM2 during activation and aggregation of platelets leads to constitutive activation of GTPase activity. In terms of processing, phosphorylated by CDK1 kinase during mitosis. As to expression, expressed in the central nervous system, including cortex, cerebellum, midbrain and spinal cord, and in the kidney, lung, liver and spleen.

The protein resides in the membrane. Its subcellular location is the cytoplasm. It is found in the early endosome membrane. The protein localises to the recycling endosome membrane. The catalysed reaction is GTP + H2O = GDP + phosphate + H(+). Its activity is regulated as follows. Regulated by guanine nucleotide exchange factors (GEFs) which promote the exchange of bound GDP for free GTP. Regulated by GTPase activating proteins (GAPs) which increase the GTP hydrolysis activity. Inhibited by GDP dissociation inhibitors (GDIs). The small GTPases Rab are key regulators of intracellular membrane trafficking, from the formation of transport vesicles to their fusion with membranes. Rabs cycle between an inactive GDP-bound form and an active GTP-bound form that is able to recruit to membranes different sets of downstream effectors directly responsible for vesicle formation, movement, tethering and fusion. RAB4A is involved in protein transport. Also plays a role in vesicular traffic. Mediates VEGFR2 endosomal trafficking to enhance VEGFR2 signaling. Acts as a regulator of platelet alpha-granule release during activation and aggregation of platelets. The sequence is that of Ras-related protein Rab-4A from Mus musculus (Mouse).